Consider the following 324-residue polypeptide: MLKASLKSIASYIPEKILSNTDLEKMVDTTDEWIARRTGIKERRIANENENTSDLGTKAALKAIERANLKPEDIDAILVATLSPDYFTMPSTACKIASNLGLVNISAFDISAACSGFIYLLEQAKALVESGLKKNVLIIGAEKTSSIMDYSDRSICILFGDGAGAGVVSLDNENYILDVHTASNGNYGDLLMTQRSQKSSLCQTLSMQMKGNEVFKIAVNTLSNDVVEILAKNNILAQEIDLFIPHQANLRIIKAVQEKLNLSDEKCVITVQKYGNTSAASIPMAMNDAYEEGRLKKGNLILLDAFGGGFTWGSALLKFGGENF.

Residues cysteine 114 and histidine 246 contribute to the active site. The tract at residues 247–251 is ACP-binding; the sequence is QANLR. Asparagine 276 is an active-site residue.

It belongs to the thiolase-like superfamily. FabH family. In terms of assembly, homodimer.

The protein resides in the cytoplasm. The enzyme catalyses malonyl-[ACP] + acetyl-CoA + H(+) = 3-oxobutanoyl-[ACP] + CO2 + CoA. It participates in lipid metabolism; fatty acid biosynthesis. Catalyzes the condensation reaction of fatty acid synthesis by the addition to an acyl acceptor of two carbons from malonyl-ACP. Catalyzes the first condensation reaction which initiates fatty acid synthesis and may therefore play a role in governing the total rate of fatty acid production. Possesses both acetoacetyl-ACP synthase and acetyl transacylase activities. Its substrate specificity determines the biosynthesis of branched-chain and/or straight-chain of fatty acids. This chain is Beta-ketoacyl-[acyl-carrier-protein] synthase III, found in Campylobacter jejuni subsp. doylei (strain ATCC BAA-1458 / RM4099 / 269.97).